The sequence spans 313 residues: tRNA dimethylallyltransferase (313 aa).

9 to 16 is a binding site for ATP; it reads GPTASGKT. 11 to 16 contacts substrate; it reads TASGKT. The interval 34–37 is interaction with substrate tRNA; it reads DSMQ.

Belongs to the IPP transferase family. In terms of assembly, monomer. Mg(2+) serves as cofactor.

It carries out the reaction adenosine(37) in tRNA + dimethylallyl diphosphate = N(6)-dimethylallyladenosine(37) in tRNA + diphosphate. In terms of biological role, catalyzes the transfer of a dimethylallyl group onto the adenine at position 37 in tRNAs that read codons beginning with uridine, leading to the formation of N6-(dimethylallyl)adenosine (i(6)A). In Acetivibrio thermocellus (strain ATCC 27405 / DSM 1237 / JCM 9322 / NBRC 103400 / NCIMB 10682 / NRRL B-4536 / VPI 7372) (Clostridium thermocellum), this protein is tRNA dimethylallyltransferase.